A 247-amino-acid polypeptide reads, in one-letter code: TM2 domain-containing protein 3 (247 aa).

The first 25 residues, Met1–Gly25, serve as a signal peptide directing secretion. At Arg26–Asn179 the chain is on the extracellular side. 6 N-linked (GlcNAc...) asparagine glycosylation sites follow: Asn87, Asn99, Asn139, Asn155, Asn169, and Asn179. Residues Trp180–Gly200 form a helical membrane-spanning segment. The region spanning Gly183–Phe231 is the TM2 domain. At Ala201–Lys215 the chain is on the cytoplasmic side. Residues Leu216–Gly236 form a helical membrane-spanning segment. The Extracellular portion of the chain corresponds to Tyr237–Ile247.

Belongs to the TM2 family.

Its subcellular location is the membrane. This chain is TM2 domain-containing protein 3 (tm2d3), found in Xenopus tropicalis (Western clawed frog).